The following is a 484-amino-acid chain: Cobyric acid synthase (484 aa).

In terms of domain architecture, GATase cobBQ-type spans 248-435 (VLKVIVPVLP…LHGLFEGSQS (188 aa)). Cys329 functions as the Nucleophile in the catalytic mechanism. The active site involves His427.

This sequence belongs to the CobB/CobQ family. CobQ subfamily.

It participates in cofactor biosynthesis; adenosylcobalamin biosynthesis. Its function is as follows. Catalyzes amidations at positions B, D, E, and G on adenosylcobyrinic A,C-diamide. NH(2) groups are provided by glutamine, and one molecule of ATP is hydrogenolyzed for each amidation. The polypeptide is Cobyric acid synthase (Pseudomonas putida (strain W619)).